A 166-amino-acid polypeptide reads, in one-letter code: NADPH-dependent 7-cyano-7-deazaguanine reductase (166 aa).

Cysteine 57 (thioimide intermediate) is an active-site residue. Catalysis depends on aspartate 64, which acts as the Proton donor. Substrate contacts are provided by residues 79–81 and 98–99; these read VES and HE.

This sequence belongs to the GTP cyclohydrolase I family. QueF type 1 subfamily.

Its subcellular location is the cytoplasm. The catalysed reaction is 7-aminomethyl-7-carbaguanine + 2 NADP(+) = 7-cyano-7-deazaguanine + 2 NADPH + 3 H(+). The protein operates within tRNA modification; tRNA-queuosine biosynthesis. In terms of biological role, catalyzes the NADPH-dependent reduction of 7-cyano-7-deazaguanine (preQ0) to 7-aminomethyl-7-deazaguanine (preQ1). This chain is NADPH-dependent 7-cyano-7-deazaguanine reductase, found in Staphylococcus epidermidis (strain ATCC 35984 / DSM 28319 / BCRC 17069 / CCUG 31568 / BM 3577 / RP62A).